A 404-amino-acid chain; its full sequence is Probable protein phosphatase 1N (404 aa).

Residues 59–319 form the PPM-type phosphatase domain; the sequence is RFGASAVQGW…DNMTCMVVCF (261 aa). Mn(2+) contacts are provided by Asp-96, Gly-97, Asp-267, and Asp-310.

The protein belongs to the PP2C family. Mg(2+) serves as cofactor. The cofactor is Mn(2+).

The enzyme catalyses O-phospho-L-seryl-[protein] + H2O = L-seryl-[protein] + phosphate. It catalyses the reaction O-phospho-L-threonyl-[protein] + H2O = L-threonyl-[protein] + phosphate. The protein is Probable protein phosphatase 1N (Ppm1n) of Mus musculus (Mouse).